Reading from the N-terminus, the 201-residue chain is Dynactin subunit 6 (201 aa).

It belongs to the dynactin subunits 5/6 family. Dynactin subunit 6 subfamily. As to quaternary structure, member of the pointed-end complex of the dynactin shoulder complex which contains dctn4, dctn5 and dctn6 subunits and Actr10. Within the complex dctn6 forms a heterodimer with dctn5. Interacts with plk1.

It localises to the cytoplasm. The protein localises to the cytoskeleton. It is found in the chromosome. The protein resides in the centromere. Its subcellular location is the kinetochore. Functionally, part of the dynactin complex that activates the molecular motor dynein for ultra-processive transport along microtubules. The protein is Dynactin subunit 6 (dctn6) of Xenopus tropicalis (Western clawed frog).